A 144-amino-acid polypeptide reads, in one-letter code: Maximins 1/H12 (144 aa).

The signal sequence occupies residues 1-18; sequence MNFKYIVAVSFLIASAYA. Positions 19-43 are excised as a propeptide; the sequence is RSEENDEQSLSQRDVLEEESLREIR. At Asn70 the chain carries Asparagine amide. Residues 74-123 constitute a propeptide that is removed on maturation; it reads TAEEHEVMKRLEVVMRDLDSLDYPEEASERETRDFNQEEIANLYTKKEKR. Ile143 is modified (isoleucine amide).

The protein belongs to the bombinin family. As to expression, expressed by the skin glands.

It is found in the secreted. Functionally, maximin-1 shows antibacterial activity against both Gram-positive and Gram-negative bacteria. It also shows antimicrobial activity against the fungus C.albicans, but not against A.flavus nor P.uticale. It has little hemolytic activity. It possess a significant cytotoxicity against tumor cell lines. It does not possess a significant anti-HIV activity. It shows high spermicidal activity. Its function is as follows. Maximin-H12 shows antimicrobial activity against bacteria and against the fungus C.albicans. Shows strong hemolytic activity. The polypeptide is Maximins 1/H12 (Bombina maxima (Giant fire-bellied toad)).